The following is a 211-amino-acid chain: Regulator of G-protein signaling 2 (211 aa).

Disordered regions lie at residues 14–33 (GPMD…REKM) and 49–71 (LQNS…TFIK). The segment at 32 to 66 (KMKRTLLKDWKSRLSYFLQNSSSPGKPKTGKKSKQ) is necessary for membrane association. A necessary to inhibit protein synthesis region spans residues 79-116 (LWSEAFDELLASKYGLAAFRAFLKSEFCEENIEFWLAC). The region spanning 83-199 (AFDELLASKY…LESEFYQDLC (117 aa)) is the RGS domain.

In terms of assembly, interacts with GNAQ. Does not interact with GNAI1 and GNAI3. Interacts with EIF2B5. Interacts with PRKG1 (isoform alpha). Post-translationally, phosphorylated by protein kinase C. Phosphorylation by PRKG1 leads to activation of RGS2 activity.

It is found in the cell membrane. Its subcellular location is the cytoplasm. It localises to the nucleus. The protein resides in the nucleolus. Its function is as follows. Regulates G protein-coupled receptor signaling cascades. Inhibits signal transduction by increasing the GTPase activity of G protein alpha subunits, thereby driving them into their inactive GDP-bound form. It is involved in the negative regulation of the angiotensin-activated signaling pathway. Plays a role in the regulation of blood pressure in response to signaling via G protein-coupled receptors and GNAQ. Plays a role in regulating the constriction and relaxation of vascular smooth muscle. Binds EIF2B5 and blocks its activity, thereby inhibiting the translation of mRNA into protein. The protein is Regulator of G-protein signaling 2 (RGS2) of Bos taurus (Bovine).